Here is a 379-residue protein sequence, read N- to C-terminus: MTSNSGSTALRDARRIVVKVGSSLVTNEGRGLDEAAIGEWCRQLAVLVQGGREVVMVSSGAIAEGMKRLGWRTRPHEVHELQAAAAVGQMGLAQMYETKLRENRIGSAQVLLTHADLADRERYLNARSTLVTLLGLGVVPVINENDTVVNDEIKFGDNDTLGALVANLVEADALVILTDQKGLYTADPRKDPQAKFVHEAAAGDPALEAMAGGAGSSLGRGGMITKILAAKRAAGSGASTVIAWGREPDALLRLVRGESIGTLLVAQTAKHQARKRWMADHLQLRGAVTVDAGAAAKVRAEGKSLLPIGMTGVSGEFSRGDVIAVRDADGVELARGLANYSSVEARLLCRKPSSEFERLLGYVAEPEMVHRDNMVLMRG.

Residue Lys19 participates in ATP binding. Substrate is bound by residues Ser59, Asp146, and Asn158. 178–179 (TD) contacts ATP. Residues 285–363 (RGAVTVDAGA…SEFERLLGYV (79 aa)) form the PUA domain.

It belongs to the glutamate 5-kinase family.

It localises to the cytoplasm. The enzyme catalyses L-glutamate + ATP = L-glutamyl 5-phosphate + ADP. It participates in amino-acid biosynthesis; L-proline biosynthesis; L-glutamate 5-semialdehyde from L-glutamate: step 1/2. In terms of biological role, catalyzes the transfer of a phosphate group to glutamate to form L-glutamate 5-phosphate. This chain is Glutamate 5-kinase, found in Variovorax paradoxus (strain S110).